The sequence spans 164 residues: Anterior gradient protein 2 (164 aa).

The signal sequence occupies residues 1 to 20 (METVLKTLFVLLVATSLTLA). 2 short sequence motifs (homodimer stabilization; interchain) span residues 34-43 (SRGWGDNLEW) and 49-56 (EGLYKAKT).

This sequence belongs to the AGR family. As to quaternary structure, monomer and homodimer.

The protein resides in the secreted. The protein localises to the endoplasmic reticulum. This is Anterior gradient protein 2 from Xenopus tropicalis (Western clawed frog).